Consider the following 607-residue polypeptide: Elongation factor 4 (607 aa).

The tr-type G domain maps to 11-193 (ENIRNFSIIA…KIVEVVPAPD (183 aa)). Residues 23–28 (DHGKST) and 140–143 (NKID) contribute to the GTP site.

The protein belongs to the TRAFAC class translation factor GTPase superfamily. Classic translation factor GTPase family. LepA subfamily.

The protein localises to the cell membrane. The catalysed reaction is GTP + H2O = GDP + phosphate + H(+). Its function is as follows. Required for accurate and efficient protein synthesis under certain stress conditions. May act as a fidelity factor of the translation reaction, by catalyzing a one-codon backward translocation of tRNAs on improperly translocated ribosomes. Back-translocation proceeds from a post-translocation (POST) complex to a pre-translocation (PRE) complex, thus giving elongation factor G a second chance to translocate the tRNAs correctly. Binds to ribosomes in a GTP-dependent manner. The sequence is that of Elongation factor 4 from Staphylococcus aureus (strain N315).